Here is a 308-residue protein sequence, read N- to C-terminus: Protein UL135 (308 aa).

A signal peptide spans 1 to 22 (MVWLWLGVGLLGGTGLASLVLA). The tract at residues 105–274 (KPEFPPARFE…TEPTTLPIVS (170 aa)) is disordered. The span at 126–145 (SIGRSPSHCSSSSSLSSSAS) shows a compositional bias: low complexity. Composition is skewed to pro residues over residues 152-163 (QPPPSWKPPPPP) and 219-238 (PVTPRPFPKTPTPQKPPRNP).

Belongs to the HCMV UL135 family. Interacts with host components of the WAVE2 complex ABI1, NAP1 and WAVE2. Also interacts with host ABI2 and TLN1.

Its subcellular location is the host cell membrane. It localises to the host Golgi apparatus. In terms of biological role, remodels the host actin cytoskeleton in order to impair immune recognition of infected cells. Mechanistically, interacts with members of the host WAVE2 complex and redirects the complex to the plasma membrane. In turn, the efficiency of immune synapse formation is greatly reduced. The polypeptide is Protein UL135 (UL135) (Human cytomegalovirus (strain Merlin) (HHV-5)).